The chain runs to 106 residues: Nucleoid-associated protein XOO1065 (106 aa).

Residues 80 to 89 (KIDAESKDRM) show a composition bias toward basic and acidic residues. The interval 80-106 (KIDAESKDRMGSATAGMQLPPGMKLPF) is disordered.

The protein belongs to the YbaB/EbfC family. In terms of assembly, homodimer.

It is found in the cytoplasm. The protein resides in the nucleoid. Functionally, binds to DNA and alters its conformation. May be involved in regulation of gene expression, nucleoid organization and DNA protection. The chain is Nucleoid-associated protein XOO1065 from Xanthomonas oryzae pv. oryzae (strain KACC10331 / KXO85).